The following is a 444-amino-acid chain: Homogentisate 1,2-dioxygenase (444 aa).

The active-site Proton acceptor is the His-298. Fe cation is bound by residues His-341 and Glu-347. Homogentisate-binding residues include Tyr-356 and His-377. His-377 contributes to the Fe cation binding site.

This sequence belongs to the homogentisate dioxygenase family. In terms of assembly, hexamer; dimer of trimers. The cofactor is Fe cation.

It catalyses the reaction homogentisate + O2 = 4-maleylacetoacetate + H(+). It participates in amino-acid degradation; L-phenylalanine degradation; acetoacetate and fumarate from L-phenylalanine: step 4/6. Its function is as follows. Involved in the catabolism of homogentisate (2,5-dihydroxyphenylacetate or 2,5-OH-PhAc), a central intermediate in the degradation of phenylalanine and tyrosine. Catalyzes the oxidative ring cleavage of the aromatic ring of homogentisate to yield maleylacetoacetate. This Burkholderia cenocepacia (strain ATCC BAA-245 / DSM 16553 / LMG 16656 / NCTC 13227 / J2315 / CF5610) (Burkholderia cepacia (strain J2315)) protein is Homogentisate 1,2-dioxygenase.